The chain runs to 114 residues: Small ribosomal subunit protein uS14m (114 aa).

It belongs to the universal ribosomal protein uS14 family.

The protein localises to the mitochondrion. This Eremothecium gossypii (strain ATCC 10895 / CBS 109.51 / FGSC 9923 / NRRL Y-1056) (Yeast) protein is Small ribosomal subunit protein uS14m (MRP2).